The sequence spans 80 residues: Small ribosomal subunit protein bS16 (80 aa).

Belongs to the bacterial ribosomal protein bS16 family.

The protein is Small ribosomal subunit protein bS16 of Blochmanniella pennsylvanica (strain BPEN).